A 299-amino-acid chain; its full sequence is Lipoyl synthase (299 aa).

7 residues coordinate [4Fe-4S] cluster: cysteine 45, cysteine 50, cysteine 56, cysteine 71, cysteine 75, cysteine 78, and serine 284. The region spanning 57–273 (YSKGTATFMI…GDVALAKDFL (217 aa)) is the Radical SAM core domain.

This sequence belongs to the radical SAM superfamily. Lipoyl synthase family. It depends on [4Fe-4S] cluster as a cofactor.

Its subcellular location is the cytoplasm. It carries out the reaction [[Fe-S] cluster scaffold protein carrying a second [4Fe-4S](2+) cluster] + N(6)-octanoyl-L-lysyl-[protein] + 2 oxidized [2Fe-2S]-[ferredoxin] + 2 S-adenosyl-L-methionine + 4 H(+) = [[Fe-S] cluster scaffold protein] + N(6)-[(R)-dihydrolipoyl]-L-lysyl-[protein] + 4 Fe(3+) + 2 hydrogen sulfide + 2 5'-deoxyadenosine + 2 L-methionine + 2 reduced [2Fe-2S]-[ferredoxin]. The protein operates within protein modification; protein lipoylation via endogenous pathway; protein N(6)-(lipoyl)lysine from octanoyl-[acyl-carrier-protein]: step 2/2. In terms of biological role, catalyzes the radical-mediated insertion of two sulfur atoms into the C-6 and C-8 positions of the octanoyl moiety bound to the lipoyl domains of lipoate-dependent enzymes, thereby converting the octanoylated domains into lipoylated derivatives. The polypeptide is Lipoyl synthase (Desulfotalea psychrophila (strain LSv54 / DSM 12343)).